A 113-amino-acid chain; its full sequence is U11-theraphotoxin-Hhn1q (113 aa).

Residues 1 to 21 (MNTVRVTFLLVFVLAVSLGQA) form the signal peptide. The propeptide occupies 22–74 (DKDENRMEMQEKTEQGKSYLDFAENLLLQKLEELEAKLLEEDSEESRNSRQKR). Residues 61–82 (EEDSEESRNSRQKRCIGEGVPC) are disordered. Cystine bridges form between cysteine 75-cysteine 90, cysteine 82-cysteine 95, and cysteine 89-cysteine 110.

This sequence belongs to the neurotoxin 14 (magi-1) family. 01 (HNTX-16) subfamily. As to expression, expressed by the venom gland.

The protein localises to the secreted. In terms of biological role, probable ion channel inhibitor. The protein is U11-theraphotoxin-Hhn1q of Cyriopagopus hainanus (Chinese bird spider).